The chain runs to 686 residues: Rhophilin-2 (686 aa).

The 75-residue stretch at 26–100 (NPLAQTGRSK…LEGLNISVGV (75 aa)) folds into the REM-1 domain. Residues 46-66 (QILKAVRMRTGAENLLKVATN) form an interaction with Rho region. In terms of domain architecture, BRO1 spans 111–502 (PLIPLGLKET…TDFFQKLGPL (392 aa)). The 79-residue stretch at 515–593 (RGIHFTVEEG…EEVEMKVVSL (79 aa)) folds into the PDZ domain. The residue at position 655 (Thr-655) is a Phosphothreonine.

This sequence belongs to the RHPN family. In terms of assembly, interacts with GTP-bound RhoA and RhoB. Interacts with both GTP- and GDP-bound RhoA. Interacts with KRT18.

It is found in the cytoplasm. Its subcellular location is the perinuclear region. Binds specifically to GTP-Rho. May function in a Rho pathway to limit stress fiber formation and/or increase the turnover of F-actin structures in the absence of high levels of RhoA activity. The protein is Rhophilin-2 (Rhpn2) of Mus musculus (Mouse).